We begin with the raw amino-acid sequence, 557 residues long: Isocitrate lyase (557 aa).

Thr53 carries the phosphothreonine modification. 106-108 (SGW) contacts substrate. Asp179 lines the Mg(2+) pocket. Residue Cys217 is the Proton acceptor of the active site. Substrate is bound by residues 218–219 (GH), Arg254, 437–441 (NLSPS), and Thr471.

This sequence belongs to the isocitrate lyase/PEP mutase superfamily. Isocitrate lyase family. Homotetramer. It depends on Mg(2+) as a cofactor. Post-translationally, phosphorylated in response to elevated glucose levels, leading first to reversible inactivation of the enzyme (short-term inactivation), and at a later stage to proteolytic degradation of the protein (long-term inactivation).

The protein localises to the cytoplasm. It is found in the secreted. It localises to the extracellular space. The protein resides in the extracellular matrix. Its subcellular location is the vacuole. It catalyses the reaction D-threo-isocitrate = glyoxylate + succinate. The enzyme catalyses (2S,3R)-3-hydroxybutane-1,2,3-tricarboxylate = pyruvate + succinate. Its pathway is carbohydrate metabolism; glyoxylate cycle; (S)-malate from isocitrate: step 1/2. Phosphorylated and inactivated after addition of glucose to the cell culture (repressing conditions). Catalyzes the formation of succinate and glyoxylate from isocitrate, a key step of the glyoxylate cycle, which operates as an anaplerotic route for replenishing the tricarboxylic acid cycle. Required for growth on ethanol or acetate, but dispensable when fermentable carbon sources are available. Also acts on 2-methylisocitrate. In Saccharomyces cerevisiae (strain ATCC 204508 / S288c) (Baker's yeast), this protein is Isocitrate lyase.